The sequence spans 117 residues: Large ribosomal subunit protein eL34 (117 aa).

Phosphoserine is present on serine 12. Residues 16–28 (ASNKTRLSRTPGQ) show a composition bias toward polar residues. A disordered region spans residues 16–35 (ASNKTRLSRTPGQQDRLPLH). A Glycyl lysine isopeptide (Lys-Gly) (interchain with G-Cter in SUMO2) cross-link involves residue lysine 108.

Belongs to the eukaryotic ribosomal protein eL34 family. Component of the large ribosomal subunit.

Its subcellular location is the cytoplasm. It is found in the cytosol. The protein resides in the endoplasmic reticulum. Component of the large ribosomal subunit. The ribosome is a large ribonucleoprotein complex responsible for the synthesis of proteins in the cell. In Vicugna pacos (Alpaca), this protein is Large ribosomal subunit protein eL34 (RPL34).